The following is an 897-amino-acid chain: High molecular weight rhoptry protein 3 (897 aa).

An N-terminal signal peptide occupies residues 1 to 24; sequence MRSKHLVTLFIITFLSFSTVKVWG. Intrachain disulfides connect cysteine 157/cysteine 231, cysteine 244/cysteine 253, cysteine 262/cysteine 276, cysteine 421/cysteine 620, and cysteine 475/cysteine 536. The helical transmembrane segment at 597 to 615 threads the bilayer; it reads FVLYFISIISVLYINEYYY. Disordered stretches follow at residues 788–845 and 859–897; these read KEQS…SNLK and QLDK…ENEL. Over residues 792-801 the composition is skewed to polar residues; sequence KSTSAASTSD. Residues 802 to 817 are compositionally biased toward low complexity; the sequence is ELSGSEGPSTESTSTG. At serine 804 the chain carries Phosphoserine. A compositionally biased stretch (basic and acidic residues) spans 820-832; that stretch reads GEDKTTDNTYKEM. A compositionally biased stretch (basic residues) spans 865–876; it reads PKKKKSKRKKKR. Basic and acidic residues predominate over residues 877 to 889; sequence DSSSDRILLEESK.

Component of the RhopH complex, composed of CLAG3.1/CLAG3.2, RhopH2 and RhopH3 with a 1:1:1 subunit stoichiometry. Interacts with CLAG3.1/CLAG3.2. Interacts with CDPK1; the interaction promotes RhopH3 phosphorylation in merozoites. Post-translationally, proteolytically cleaved near C-terminus.

It localises to the host cell membrane. Its subcellular location is the parasitophorous vacuole membrane. It is found in the cytoplasmic vesicle. The protein localises to the secretory vesicle. The protein resides in the rhoptry. Its function is as follows. Participates in the formation of new permeability pathways in Plasmodium-infected erythrocytes enabling the uptake of nutrients from the blood plasma. Required for maintaining invasion capacity of merozoites. Required for the trophozoite to schizont developmental transition of the intracellular parasite. This chain is High molecular weight rhoptry protein 3, found in Plasmodium falciparum.